The primary structure comprises 159 residues: Regulatory protein RecX (159 aa).

This sequence belongs to the RecX family.

The protein localises to the cytoplasm. Modulates RecA activity. The sequence is that of Regulatory protein RecX from Ralstonia pickettii (strain 12J).